A 178-amino-acid chain; its full sequence is Fibroin heavy chain (178 aa).

Residues 1 to 21 form the signal peptide; it reads MRVKTFVILCCALQYVAYTNA. A highly repetitive region spans residues 149 to 178; the sequence is AVGAGAGAGAAAGSGAGAGAGYGAASGAGA.

Silk fibroin elementary unit consists in a disulfide-linked heavy and light chain and a p25 glycoprotein in molar ratios of 6:6:1. This results in a complex of approximately 2.3 MDa. Post-translationally, the interchain disulfide bridge is essential for the intracellular transport and secretion of fibroin. In terms of tissue distribution, produced exclusively in the posterior (PSG) section of silk glands, which are essentially modified salivary glands.

Its function is as follows. Core component of the silk filament; a strong, insoluble and chemically inert fiber. The sequence is that of Fibroin heavy chain (FIBH) from Bombyx mandarina (Wild silk moth).